The primary structure comprises 178 residues: Large ribosomal subunit protein uL6 (178 aa).

This sequence belongs to the universal ribosomal protein uL6 family. In terms of assembly, part of the 50S ribosomal subunit.

This protein binds to the 23S rRNA, and is important in its secondary structure. It is located near the subunit interface in the base of the L7/L12 stalk, and near the tRNA binding site of the peptidyltransferase center. This chain is Large ribosomal subunit protein uL6, found in Streptococcus agalactiae serotype V (strain ATCC BAA-611 / 2603 V/R).